A 201-amino-acid polypeptide reads, in one-letter code: Cutinase (201 aa).

An N-terminal signal peptide occupies residues 1–20; the sequence is MKTSAQQLLSLLLLPLSAIA. Cys31 and Cys105 are joined by a disulfide. Ser116 acts as the Nucleophile in catalysis. An intrachain disulfide couples Cys164 to Cys171. The active site involves Asp168. The active-site Proton donor/acceptor is the His181.

The protein belongs to the cutinase family. The 2 disulfide bonds play a critical role in holding the catalytic residues in juxta-position; reduction of the disulfide bridges results in the complete inactivation of the enzyme.

The protein resides in the secreted. It catalyses the reaction cutin + H2O = cutin monomers.. Catalyzes the hydrolysis of complex carboxylic polyesters found in the cell wall of plants. Degrades cutin, a macromolecule that forms the structure of the plant cuticle. Allows pathogenic fungi to penetrate through the cuticular barrier into the host plant during the initial stage of fungal infection. This chain is Cutinase (CUT1), found in Monilinia fructicola (Brown rot fungus).